The primary structure comprises 116 residues: Protein Rev (116 aa).

S5 and S8 each carry phosphoserine; by host CK2. Residues 18 to 26 (LIKLLYQSN) form a homomultimerization region. The disordered stretch occupies residues 23-48 (YQSNPPPSPEGTRQARRNRRRRWRER). The Nuclear localization signal and RNA-binding (RRE) motif lies at 34–50 (TRQARRNRRRRWRERQR). A compositionally biased stretch (basic residues) spans 36-47 (QARRNRRRRWRE). The Nuclear export signal and binding to XPO1 signature appears at 73-84 (LQLPPLERLTLD). The interval 90-116 (GNSGAQGVGSPQILVESPAVLDSGTKE) is disordered. Phosphoserine; by host occurs at positions 92 and 99.

Belongs to the HIV-1 REV protein family. In terms of assembly, homomultimer; when bound to the RRE. Multimeric assembly is essential for activity and may involve XPO1. Binds to human KPNB1, XPO1, TNPO1, RANBP5 and IPO7. Interacts with the viral Integrase. Interacts with human KHDRBS1. Interacts with human NAP1; this interaction decreases Rev multimerization and stimulates its activity. Interacts with human DEAD-box helicases DDX3 and DDX24; these interactions may serve for viral RNA export to the cytoplasm and packaging, respectively. Interacts with human PSIP1; this interaction may inhibit HIV-1 DNA integration by promoting dissociation of the Integrase-LEDGF/p75 complex. Asymmetrically arginine dimethylated at one site by host PRMT6. Methylation impairs the RNA-binding activity and export of viral RNA from the nucleus to the cytoplasm. Post-translationally, phosphorylated by protein kinase CK2. Presence of, and maybe binding to the N-terminus of the regulatory beta subunit of CK2 is necessary for CK2-mediated Rev's phosphorylation.

It is found in the host nucleus. The protein localises to the host nucleolus. The protein resides in the host cytoplasm. Its function is as follows. Escorts unspliced or incompletely spliced viral pre-mRNAs (late transcripts) out of the nucleus of infected cells. These pre-mRNAs carry a recognition sequence called Rev responsive element (RRE) located in the env gene, that is not present in fully spliced viral mRNAs (early transcripts). This function is essential since most viral proteins are translated from unspliced or partially spliced pre-mRNAs which cannot exit the nucleus by the pathway used by fully processed cellular mRNAs. Rev itself is translated from a fully spliced mRNA that readily exits the nucleus. Rev's nuclear localization signal (NLS) binds directly to KPNB1/Importin beta-1 without previous binding to KPNA1/Importin alpha-1. KPNB1 binds to the GDP bound form of RAN (Ran-GDP) and targets Rev to the nucleus. In the nucleus, the conversion from Ran-GDP to Ran-GTP dissociates Rev from KPNB1 and allows Rev's binding to the RRE in viral pre-mRNAs. Rev multimerization on the RRE via cooperative assembly exposes its nuclear export signal (NES) to the surface. Rev can then form a complex with XPO1/CRM1 and Ran-GTP, leading to nuclear export of the complex. Conversion from Ran-GTP to Ran-GDP mediates dissociation of the Rev/RRE/XPO1/RAN complex, so that Rev can return to the nucleus for a subsequent round of export. Beside KPNB1, also seems to interact with TNPO1/Transportin-1, RANBP5/IPO5 and IPO7/RANBP7 for nuclear import. The nucleoporin-like HRB/RIP is an essential cofactor that probably indirectly interacts with Rev to release HIV RNAs from the perinuclear region to the cytoplasm. This Homo sapiens (Human) protein is Protein Rev.